A 126-amino-acid chain; its full sequence is Protein ApaG (126 aa).

An ApaG domain is found at 2-126 (DISTPCIKCQ…FRLAIPNILN (125 aa)).

The polypeptide is Protein ApaG (Vibrio atlanticus (strain LGP32) (Vibrio splendidus (strain Mel32))).